Consider the following 238-residue polypeptide: Uridylate kinase (238 aa).

12 to 15 (KLSG) contacts ATP. Glycine 54 contributes to the UMP binding site. ATP-binding residues include glycine 55 and arginine 59. Residues aspartate 74 and 135-142 (TGNPFFTT) each bind UMP. ATP contacts are provided by threonine 162, tyrosine 168, and aspartate 171.

The protein belongs to the UMP kinase family. Homohexamer.

The protein resides in the cytoplasm. The enzyme catalyses UMP + ATP = UDP + ADP. It functions in the pathway pyrimidine metabolism; CTP biosynthesis via de novo pathway; UDP from UMP (UMPK route): step 1/1. With respect to regulation, inhibited by UTP. Its function is as follows. Catalyzes the reversible phosphorylation of UMP to UDP. This is Uridylate kinase from Nitrosospira multiformis (strain ATCC 25196 / NCIMB 11849 / C 71).